Here is a 633-residue protein sequence, read N- to C-terminus: Probable potassium transport system protein Kup 2 (633 aa).

Transmembrane regions (helical) follow at residues 18–38 (FVGL…TSPL), 61–81 (LISL…VLFL), 107–127 (VPVL…DAMI), 143–163 (ITPA…IVLF), 176–196 (FFGP…VIHI), 211–231 (ALSF…AVFL), 255–275 (WFVL…ALVL), 293–313 (ALLP…QAVI), 345–365 (IYVP…IFSF), 371–391 (LATA…MLAF), 402–422 (FMLA…FLAA), and 429–449 (DGGW…WTWT).

Belongs to the HAK/KUP transporter (TC 2.A.72) family.

Its subcellular location is the cell inner membrane. The enzyme catalyses K(+)(in) + H(+)(in) = K(+)(out) + H(+)(out). In terms of biological role, transport of potassium into the cell. Likely operates as a K(+):H(+) symporter. This is Probable potassium transport system protein Kup 2 from Rhizobium etli (strain ATCC 51251 / DSM 11541 / JCM 21823 / NBRC 15573 / CFN 42).